The chain runs to 341 residues: tRNA N6-adenosine threonylcarbamoyltransferase (341 aa).

Histidine 111 and histidine 115 together coordinate Fe cation. Residues 134–138 (LVSGG), aspartate 167, glycine 180, and asparagine 276 each bind substrate. Aspartate 304 contributes to the Fe cation binding site.

It belongs to the KAE1 / TsaD family. Fe(2+) is required as a cofactor.

It localises to the cytoplasm. The catalysed reaction is L-threonylcarbamoyladenylate + adenosine(37) in tRNA = N(6)-L-threonylcarbamoyladenosine(37) in tRNA + AMP + H(+). Required for the formation of a threonylcarbamoyl group on adenosine at position 37 (t(6)A37) in tRNAs that read codons beginning with adenine. Is involved in the transfer of the threonylcarbamoyl moiety of threonylcarbamoyl-AMP (TC-AMP) to the N6 group of A37, together with TsaE and TsaB. TsaD likely plays a direct catalytic role in this reaction. This chain is tRNA N6-adenosine threonylcarbamoyltransferase, found in Pseudomonas putida (strain ATCC 700007 / DSM 6899 / JCM 31910 / BCRC 17059 / LMG 24140 / F1).